Reading from the N-terminus, the 359-residue chain is Peptide chain release factor 1 (359 aa).

Q236 carries the N5-methylglutamine modification.

It belongs to the prokaryotic/mitochondrial release factor family. Post-translationally, methylated by PrmC. Methylation increases the termination efficiency of RF1.

The protein resides in the cytoplasm. Functionally, peptide chain release factor 1 directs the termination of translation in response to the peptide chain termination codons UAG and UAA. The chain is Peptide chain release factor 1 from Streptococcus agalactiae.